Reading from the N-terminus, the 216-residue chain is DegV domain-containing protein UU190 (216 aa).

The region spanning 1-215 (MLWKNLDELF…LNNFAILIEA (215 aa)) is the DegV domain. S26 is a hexadecanoate binding site.

Its function is as follows. May bind long-chain fatty acids, such as palmitate, and may play a role in lipid transport or fatty acid metabolism. This is DegV domain-containing protein UU190 from Ureaplasma parvum serovar 3 (strain ATCC 700970).